A 550-amino-acid chain; its full sequence is 65-kDa microtubule-associated protein 5 (550 aa).

Coiled coils occupy residues 46-174 (NKKV…QKVN) and 288-310 (IREAEDEVRRLNSLKSSKMKELV). The disordered stretch occupies residues 471-531 (QFREQKRLQG…PGRSVTSGGK (61 aa)). Residues 502–511 (QSLNTDNVTK) show a composition bias toward polar residues.

Belongs to the MAP65/ASE1 family. As to quaternary structure, forms a dimer. Binds to MT, mostly with coaligned MT, both between parallel or antiparallel, forming thick bundles. Bundles polymerized MT via the formation of 25-nm crossbridges with cortical MT.

The protein localises to the nucleus. Its subcellular location is the cytoplasm. The protein resides in the cytoskeleton. It is found in the spindle. It localises to the phragmoplast. The protein localises to the cell cortex. Its subcellular location is the cell junction. The protein resides in the plasmodesma. Functionally, microtubule-associated protein that bundle and stabilize adjacent microtubules (MT) of the cell cortex. Confers MT resistance to the drug oryzalin. Promotes the formation of a planar network of antiparallel microtubules. In Arabidopsis thaliana (Mouse-ear cress), this protein is 65-kDa microtubule-associated protein 5 (MAP65-5).